The following is a 39-amino-acid chain: Cytochrome b559 subunit beta (39 aa).

The chain crosses the membrane as a helical span at residues 14-30 (WLTVHGLAVPTVSFLGS). A heme-binding site is contributed by histidine 18.

Belongs to the PsbE/PsbF family. Heterodimer of an alpha subunit and a beta subunit. PSII is composed of 1 copy each of membrane proteins PsbA, PsbB, PsbC, PsbD, PsbE, PsbF, PsbH, PsbI, PsbJ, PsbK, PsbL, PsbM, PsbT, PsbX, PsbY, PsbZ, Psb30/Ycf12, at least 3 peripheral proteins of the oxygen-evolving complex and a large number of cofactors. It forms dimeric complexes. The cofactor is heme b.

The protein resides in the plastid. It is found in the chloroplast thylakoid membrane. In terms of biological role, this b-type cytochrome is tightly associated with the reaction center of photosystem II (PSII). PSII is a light-driven water:plastoquinone oxidoreductase that uses light energy to abstract electrons from H(2)O, generating O(2) and a proton gradient subsequently used for ATP formation. It consists of a core antenna complex that captures photons, and an electron transfer chain that converts photonic excitation into a charge separation. The chain is Cytochrome b559 subunit beta from Cucumis sativus (Cucumber).